A 2193-amino-acid polypeptide reads, in one-letter code: Genome polyprotein (2193 aa).

Positions 1 to 23 are disordered; sequence MGSQVSTQRSGSHENSNSASEGS. Gly2 is lipidated: N-myristoyl glycine; by host. Residues 2-1503 lie on the Cytoplasmic side of the membrane; sequence GSQVSTQRSG…HLNRAVLVMQ (1502 aa). The interval 566 to 588 is amphipathic alpha-helix; that stretch reads GDPIADMIDQTVNNQVNRSLTAL. Catalysis depends on for protease 2A activity residues His883 and Asp901. Zn(2+)-binding residues include Cys918 and Cys920. Catalysis depends on Cys972, which acts as the For protease 2A activity. The Zn(2+) site is built by Cys978 and His980. The membrane-binding stretch occupies residues 1112 to 1184; it reads SASWLKKFND…EQSAASQEDL (73 aa). Residues 1112–1250 form an oligomerization region; the sequence is SASWLKKFND…SPGTGKSLAT (139 aa). Residues 1133 to 1137 are RNA-binding; it reads SSKIS. Residues 1216–1374 form the SF3 helicase domain; it reads EKRMNNYMQF…YKTDLGRLDA (159 aa). 1240–1247 contacts ATP; it reads GSPGTGKS. Cys1381, Cys1392, and Cys1397 together coordinate Zn(2+). The C4-type; degenerate zinc-finger motif lies at 1381–1397; the sequence is CTENNTANFKRCSPLVC. The interval 1424–1431 is RNA-binding; it reads EYNNRSAI. Residues 1435-1440 are oligomerization; it reads IEALFQ. Residues 1504–1519 lie within the membrane without spanning it; sequence SIATVVAVVSLVYVIY. Over 1520–2193 the chain is Cytoplasmic; that stretch reads KLFAGFQGAY…NLRRNWLELF (674 aa). Tyr1529 is subject to O-(5'-phospho-RNA)-tyrosine. The Peptidase C3 domain maps to 1549–1727; the sequence is GPSLDFALSL…FCAGLKRGYF (179 aa). Residues His1588, Glu1619, and Cys1695 each act as for protease 3C activity in the active site. One can recognise a RdRp catalytic domain in the interval 1958 to 2074; the sequence is GSLFAFDYSG…SYPFPIDCSE (117 aa). Mg(2+) is bound by residues Asp1964 and Asp2060.

This sequence belongs to the picornaviruses polyprotein family. Interacts with capsid protein VP1 and capsid protein VP3 to form heterotrimeric protomers. As to quaternary structure, interacts with capsid protein VP0, and capsid protein VP3 to form heterotrimeric protomers. Five protomers subsequently associate to form pentamers which serve as building blocks for the capsid. Interacts with capsid protein VP2, capsid protein VP3 and capsid protein VP4 following cleavage of capsid protein VP0. In terms of assembly, interacts with capsid protein VP1 and capsid protein VP3 in the mature capsid. Interacts with capsid protein VP0 and capsid protein VP1 to form heterotrimeric protomers. Five protomers subsequently associate to form pentamers which serve as building blocks for the capsid. Interacts with capsid protein VP4 in the mature capsid. Interacts with protein 2C; this interaction may be important for virion morphogenesis. As to quaternary structure, interacts with capsid protein VP1 and capsid protein VP3. In terms of assembly, homodimer. Homohexamer; forms a hexameric ring structure with 6-fold symmetry characteristic of AAA+ ATPases. Interacts (via N-terminus) with host RTN3 (via reticulon domain); this interaction is important for viral replication. Interacts with capsid protein VP3; this interaction may be important for virion morphogenesis. As to quaternary structure, interacts with protein 3CD. In terms of assembly, homodimer. Interacts with host GBF1. Interacts (via GOLD domain) with host ACBD3 (via GOLD domain); this interaction allows the formation of a viral protein 3A/ACBD3 heterotetramer with a 2:2 stoichiometry, which will stimulate the recruitment of host PI4KB in order to synthesize PI4P at the viral RNA replication sites. Interacts with RNA-directed RNA polymerase. As to quaternary structure, interacts with host IFIH1/MDA5; this interaction inhibits host IFIH1. In terms of assembly, protein 3CD: Interacts with protein 3AB and with RNA-directed RNA polymerase. Interacts with Viral protein genome-linked and with protein 3CD. The cofactor is Mg(2+). Specific enzymatic cleavages in vivo by the viral proteases yield processing intermediates and the mature proteins. In terms of processing, myristoylation is required for the formation of pentamers during virus assembly. Further assembly of 12 pentamers and a molecule of genomic RNA generates the provirion. Post-translationally, during virion maturation, immature virions are rendered infectious following cleavage of VP0 into VP4 and VP2. This maturation seems to be an autocatalytic event triggered by the presence of RNA in the capsid and it is followed by a conformational change infectious virion. Myristoylation is required during RNA encapsidation and formation of the mature virus particle. In terms of processing, VPg is uridylylated by the polymerase into VPg-pUpU. This acts as a nucleotide-peptide primer for the genomic RNA replication.

Its subcellular location is the virion. The protein localises to the host cytoplasm. The protein resides in the host cytoplasmic vesicle membrane. It is found in the host nucleus. It catalyses the reaction a ribonucleoside 5'-triphosphate + H2O = a ribonucleoside 5'-diphosphate + phosphate + H(+). It carries out the reaction Selective cleavage of Tyr-|-Gly bond in the picornavirus polyprotein.. The catalysed reaction is RNA(n) + a ribonucleoside 5'-triphosphate = RNA(n+1) + diphosphate. The enzyme catalyses Selective cleavage of Gln-|-Gly bond in the poliovirus polyprotein. In other picornavirus reactions Glu may be substituted for Gln, and Ser or Thr for Gly.. Replication or transcription is subject to high level of random mutations by the nucleotide analog ribavirin. Functionally, forms an icosahedral capsid of pseudo T=3 symmetry with capsid proteins VP2 and VP3. The capsid is 300 Angstroms in diameter, composed of 60 copies of each capsid protein and enclosing the viral positive strand RNA genome. Capsid protein VP1 mainly forms the vertices of the capsid. Capsid protein VP1 interacts with host cell receptor to provide virion attachment to target host cells. This attachment induces virion internalization. After binding to its receptor, the capsid undergoes conformational changes. Capsid protein VP1 N-terminus (that contains an amphipathic alpha-helix) and capsid protein VP4 are externalized. Together, they shape a pore in the host membrane through which viral genome is translocated to host cell cytoplasm. Its function is as follows. Forms an icosahedral capsid of pseudo T=3 symmetry with capsid proteins VP2 and VP3. The capsid is 300 Angstroms in diameter, composed of 60 copies of each capsid protein and enclosing the viral positive strand RNA genome. In terms of biological role, lies on the inner surface of the capsid shell. After binding to the host receptor, the capsid undergoes conformational changes. Capsid protein VP4 is released, Capsid protein VP1 N-terminus is externalized, and together, they shape a pore in the host membrane through which the viral genome is translocated into the host cell cytoplasm. Component of immature procapsids, which is cleaved into capsid proteins VP4 and VP2 after maturation. Allows the capsid to remain inactive before the maturation step. Functionally, cysteine protease that cleaves viral polyprotein and specific host proteins. It is responsible for the autocatalytic cleavage between the P1 and P2 regions, which is the first cleavage occurring in the polyprotein. Also cleaves the host translation initiation factor EIF4G1, in order to shut down the capped cellular mRNA translation. Inhibits the host nucleus-cytoplasm protein and RNA trafficking by cleaving host members of the nuclear pores. Counteracts stress granule formation probably by antagonizing its assembly or promoting its dissassembly. Cleaves and inhibits host IFIH1/MDA5, thereby inhibiting the type-I IFN production and the establishment of the antiviral state. Cleaves and inhibits host MAVS, thereby inhibiting the type-I IFN production and the establishment of the antiviral state. Its function is as follows. Plays an essential role in the virus replication cycle by acting as a viroporin. Creates a pore in the host endoplasmic reticulum and as a consequence releases Ca2+ in the cytoplasm of infected cell. In turn, high levels of cytoplasmic calcium may trigger membrane trafficking and transport of viral ER-associated proteins to viroplasms, sites of viral genome replication. In terms of biological role, induces and associates with structural rearrangements of intracellular membranes. Displays RNA-binding, nucleotide binding and NTPase activities. May play a role in virion morphogenesis and viral RNA encapsidation by interacting with the capsid protein VP3. Localizes the viral replication complex to the surface of membranous vesicles. Together with protein 3CD binds the Cis-Active RNA Element (CRE) which is involved in RNA synthesis initiation. Acts as a cofactor to stimulate the activity of 3D polymerase, maybe through a nucleid acid chaperone activity. Functionally, localizes the viral replication complex to the surface of membranous vesicles. It inhibits host cell endoplasmic reticulum-to-Golgi apparatus transport and causes the disassembly of the Golgi complex, possibly through GBF1 interaction. This would result in depletion of MHC, trail receptors and IFN receptors at the host cell surface. Plays an essential role in viral RNA replication by recruiting ACBD3 and PI4KB at the viral replication sites, thereby allowing the formation of the rearranged membranous structures where viral replication takes place. Its function is as follows. Acts as a primer for viral RNA replication and remains covalently bound to viral genomic RNA. VPg is uridylylated prior to priming replication into VPg-pUpU. The oriI viral genomic sequence may act as a template for this. The VPg-pUpU is then used as primer on the genomic RNA poly(A) by the RNA-dependent RNA polymerase to replicate the viral genome. During genome replication, the VPg-RNA linkage is removed by the host TDP2, thereby accelerating replication. During the late stage of the replication cycle, host TDP2 is excluded from sites of viral RNA synthesis and encapsidation, allowing for the generation of progeny virions. In terms of biological role, involved in the viral replication complex and viral polypeptide maturation. It exhibits protease activity with a specificity and catalytic efficiency that is different from protease 3C. Protein 3CD lacks polymerase activity. Protein 3CD binds to the 5'UTR of the viral genome. Major viral protease that mediates proteolytic processing of the polyprotein. Cleaves host EIF5B, contributing to host translation shutoff. Also cleaves host PABPC1, contributing to host translation shutoff. Binds and inhibits host IFIH1/MDA5, thereby inhibiting the type-I IFN production and the establishment of the antiviral state. Cleaves host MAP3K7/TAK1, resulting in inhibition of TRAF6-triggered NF-kappa-B induction. Cleaves host NLRP1, triggers host N-glycine-mediated degradation of the autoinhibitory NLRP1 N-terminal fragment. Functionally, replicates the viral genomic RNA on the surface of intracellular membranes. May form linear arrays of subunits that propagate along a strong head-to-tail interaction called interface-I. Covalently attaches UMP to a tyrosine of VPg, which is used to prime RNA synthesis. The positive stranded RNA genome is first replicated at virus induced membranous vesicles, creating a dsRNA genomic replication form. This dsRNA is then used as template to synthesize positive stranded RNA genomes. ss(+)RNA genomes are either translated, replicated or encapsidated. This is Genome polyprotein from Homo sapiens (Human).